We begin with the raw amino-acid sequence, 395 residues long: MQNELQTALFQAFDTLNLQRVKTFSVPPVTLCGPGSVSSCGQQAQTRGLKHLFVMADSFLHQAGMTAGLTRSLTVKGIAMTLWPCPVGEPCITDVCAAVAQLRESGCDGVIAFGGGSVLDAAKAVTLLVTNPDSTLAEMSETSVLQPRLPLIAIPTTAGTGSETTNVTVIIDAVSGRKQVLAHASLMPDVAILDAALTEGVPSHVTAMTGIDALTHAIEAYSALNATPFTDSLAIGAIAMIGKSLPKAVGYGHDLAARESMLLASCMAGMAFSSAGLGLCHAMAHQPGAALHIPHGLANAMLLPTVMEFNRMVCRERFSQIGRALRTKKSDDRDAINAVSELIAEVGIGKRLGDVGATSAHYGAWAQAALEDICLRSNPRTASLEQIVGLYAAAQ.

NAD(+)-binding positions include Asp57, Gly116–Asp120, Thr156–Thr160, Lys178, and Leu197–Val201. 4 residues coordinate Fe cation: Asp212, His216, His281, and His295. Residues His295 and Asp354 each coordinate NAD(+).

It belongs to the iron-containing alcohol dehydrogenase family. Requires Fe cation as cofactor.

It is found in the bacterial microcompartment. It carries out the reaction ethanol + NAD(+) = acetaldehyde + NADH + H(+). Its pathway is amine and polyamine degradation; ethanolamine degradation. Functionally, may act on the acetaldehyde produced from the degradation of ethanolamine, producing ethanol. Active on acetaldehyde and isobutyraldehyde in vitro. In vitro works equally well with NADH or NADPH. The chain is Probable alcohol dehydrogenase EutG (eutG) from Escherichia coli (strain K12).